The sequence spans 349 residues: PhoH-like protein (349 aa).

ATP is bound at residue 147 to 154; sequence GPAGTGKT.

This sequence belongs to the PhoH family.

Its subcellular location is the cytoplasm. The protein is PhoH-like protein of Mycobacterium leprae (strain TN).